Here is a 299-residue protein sequence, read N- to C-terminus: DNA-binding transcriptional repressor CapW (299 aa).

The tract at residues 1–22 (MTDESKPTDDQPTSKGRQGARW) is disordered. A winged HTH domain region spans residues 1-95 (MTDESKPTDD…SFKAVFPSSA (95 aa)). A WYL domain region spans residues 96-207 (VERYLDDLLR…LTRIKCCKYV (112 aa)). The WYL domain maps to 131 to 211 (GRRLNADIVG…KCCKYVGQDR (81 aa)). The segment at 156–200 (YQSLTDPEGGERMLSPHALVHDGNRWHVRAYCHKRKAFRDFSLTR) is probable ligand-binding region. Residues 208-299 (GQDRDRADED…RDEIKDLIQY (92 aa)) form a WCX domain region.

Homodimer.

In terms of biological role, transcriptional regulator of a CBASS antivirus system. CBASS (cyclic oligonucleotide-based antiphage signaling system) provides immunity against bacteriophage. The CD-NTase protein synthesizes cyclic nucleotides in response to infection; these serve as specific second messenger signals. The signals activate a diverse range of effectors, leading to bacterial cell death and thus abortive phage infection. A type III CBASS system, part of a Cap17-CapW-CdnC-Cap7-Cap6-Cap18 locus. Binds specifically to palindromes that overlap the -10 site in the promoter of cdnC, found between the genes for divergently transcribed capW and cdnC (cognate DNA). Probably represses transcription bidirectionally from the promoter. In Pseudomonas aeruginosa, this protein is DNA-binding transcriptional repressor CapW.